Here is a 1313-residue protein sequence, read N- to C-terminus: Inactive protein tyrosine kinase pTKL (1313 aa).

MORN repeat units lie at residues 20-42 (YAGD…ENGN) and 45-63 (FGHF…IDKN). Residues Asn-63, Asn-131, Asn-178, Asn-208, Asn-254, Asn-260, and Asn-288 are each glycosylated (N-linked (GlcNAc...) asparagine). Positions 300–365 (WNKEQVAQWL…LQLIKNLRVT (66 aa)) constitute an SAM domain. N-linked (GlcNAc...) asparagine glycans are attached at residues Asn-466, Asn-516, Asn-525, Asn-528, and Asn-534. Residues 569 to 580 (EPIKPNKEKEEN) are compositionally biased toward basic and acidic residues. The disordered stretch occupies residues 569–631 (EPIKPNKEKE…SEKSSETSSE (63 aa)). A compositionally biased stretch (polar residues) spans 586–604 (PIINSKNETNLLNDSNPTK). 7 N-linked (GlcNAc...) asparagine glycosylation sites follow: Asn-592, Asn-598, Asn-661, Asn-678, Asn-729, Asn-735, and Asn-749. Lys-782 serves as a coordination point for ATP. 5 N-linked (GlcNAc...) asparagine glycosylation sites follow: Asn-790, Asn-868, Asn-940, Asn-983, and Asn-1000. Residues 962–1294 (FRNKNNILCG…FDRILIEISM (333 aa)) enclose the Protein kinase domain. An RVxF motif motif is present at residues 1052-1055 (KILF). N-linked (GlcNAc...) asparagine glycans are attached at residues Asn-1191 and Asn-1198.

It belongs to the protein kinase superfamily. TKL Ser/Thr protein kinase family.

The protein resides in the parasitophorous vacuole. Its subcellular location is the host cell membrane. It is found in the host cytoplasm. It localises to the host cytoskeleton. The sequence is that of Inactive protein tyrosine kinase pTKL from Plasmodium berghei (strain Anka).